The sequence spans 184 residues: UPF0669 protein C6orf120 homolog (184 aa).

The N-terminal stretch at 1–23 (MAAPWTGALLLLLASQAVSSAQA) is a signal peptide. Residue Asn-47 is glycosylated (N-linked (GlcNAc...) asparagine).

Belongs to the UPF0669 family.

The protein localises to the secreted. Functionally, may be involved in induction of apoptosis in CD4(+) T-cells, but not CD8(+) T-cells or hepatocytes. The polypeptide is UPF0669 protein C6orf120 homolog (Bos taurus (Bovine)).